Here is a 522-residue protein sequence, read N- to C-terminus: MENIEKLLMQEKILMLELDLVRAKISLARANGSSQQGELSLHRETPEKEVAVHSALVTFTPTQVKAIPEQTAPGKESTNPLMASILPKDMNPVQTGTRLAVPSDFLRPHQGIPIPQKSELSSTVVPLRAESGIQHPHINYYVVYNGPHAGIYDDWGCTKAATNGVPGVAHKKFATITEARAAADAYTTRQQTDRLNFIPKGEAQLKPKSFAEALTSPPKQKAHWLTLGTKKPSSDPAPKEISFAPEITMDDFLYLYDLVRKFDGEGDDTMFTTDNEKISLFNFRKNANPQMVREAYAAGLIKTIYPSNNLQEIKYLPKKVKDAVKRFRTNCIKNTEKDIFLKIRSTIPVWTIQGLLHKPRQVIEIGVSKKVIPTESKAMESRIQIEDLTELAVKTGEQFIQSLLRLNDKKKIFVNMVEHDTLVYSKNIKETDSEDQRAIETFQQRVISGNLLGFHCPAICHFIMKTVEKEGGAYKCHHCDKGKAIVQDASADEGTTDKSGPPPTRSIVEKEDVPNTSSKQVD.

The interval 488–522 (DASADEGTTDKSGPPPTRSIVEKEDVPNTSSKQVD) is disordered.

It belongs to the caulimoviridae viroplasmin family.

The protein localises to the host cytoplasm. In terms of biological role, enhances the ribosomal termination-reinitiation event leading to the translation of major open reading frames on the polycistronic viral RNAs. In Cauliflower mosaic virus (strain D/H) (CaMV), this protein is Transactivator/viroplasmin protein.